A 173-amino-acid polypeptide reads, in one-letter code: Plasmolipin (173 aa).

Residues 1-34 (MADFPGKVSTQTSSQEPQRSFAISSSVDMGFIKS) lie on the Cytoplasmic side of the membrane. Positions 31–160 (FIKSIPGILL…SSYFAYLGWR (130 aa)) constitute an MARVEL domain. The helical transmembrane segment at 35–55 (IPGILLIAEIVVGLLVWTLIA) threads the bilayer. Residues 56 to 67 (STPHYLIPALGW) lie on the Extracellular side of the membrane. Residues 68-88 (VLFVSITLWLLSIALLVILLL) traverse the membrane as a helical segment. Topologically, residues 89–98 (SLHQRLPSVP) are cytoplasmic. Residues 99 to 119 (WPLVLLVFYSVAALLYLTAFL) form a helical membrane-spanning segment. The Extracellular segment spans residues 120–138 (ANAATVPGGYYQGHLGASA). The chain crosses the membrane as a helical span at residues 139–159 (FFGIVETLLYTASSYFAYLGW). The Cytoplasmic segment spans residues 160 to 173 (RGEGQNAAGSTVPV).

The protein belongs to the MAL family. As to quaternary structure, forms oligomers. As to expression, expressed in the posterior midgut.

It is found in the cell membrane. Its subcellular location is the myelin membrane. The protein localises to the apical cell membrane. It localises to the recycling endosome membrane. The protein resides in the vesicle. In terms of biological role, main component of the myelin sheath that plays an important role in myelin membrane biogenesis and myelination. Plays an essential function in apical endocytosis. Plays an important role by activating the Notch signaling pathway, which is essential for cell differentiation and results in correct patterning of the intestinal epithelium, particularly of the posterior gut absorptive cells. This Danio rerio (Zebrafish) protein is Plasmolipin (pllp).